Reading from the N-terminus, the 243-residue chain is NAD(P)H-quinone oxidoreductase subunit K (243 aa).

[4Fe-4S] cluster contacts are provided by Cys-59, Cys-60, Cys-124, and Cys-155.

It belongs to the complex I 20 kDa subunit family. NDH-1 can be composed of about 15 different subunits; different subcomplexes with different compositions have been identified which probably have different functions. The cofactor is [4Fe-4S] cluster.

It is found in the cellular thylakoid membrane. It carries out the reaction a plastoquinone + NADH + (n+1) H(+)(in) = a plastoquinol + NAD(+) + n H(+)(out). It catalyses the reaction a plastoquinone + NADPH + (n+1) H(+)(in) = a plastoquinol + NADP(+) + n H(+)(out). In terms of biological role, NDH-1 shuttles electrons from an unknown electron donor, via FMN and iron-sulfur (Fe-S) centers, to quinones in the respiratory and/or the photosynthetic chain. The immediate electron acceptor for the enzyme in this species is believed to be plastoquinone. Couples the redox reaction to proton translocation, and thus conserves the redox energy in a proton gradient. Cyanobacterial NDH-1 also plays a role in inorganic carbon-concentration. The polypeptide is NAD(P)H-quinone oxidoreductase subunit K (Picosynechococcus sp. (strain ATCC 27264 / PCC 7002 / PR-6) (Agmenellum quadruplicatum)).